Consider the following 764-residue polypeptide: MLDLTNQESDSSENGNSKYADSTDGRGIGTSRRLDDEDLDERRKDLADLVFWMSGLKATTLPLDDHTSLCNGRAFAEILHEIDRSFFDERWLETMPEMRTSSNLVVKRSNLRKLWRKMSDYIQVLNRKVVSTRWTEIGDRLDGLDETDIPVAADLAMAVVSLAFIGKTQEKYIQYSQELPAGEHQHMMANVARLVQIVMEELPEVPTFHEISELDGSQNELNSSHVESSVITNGNGSAERRSTLSANDQVLVEAQLEIDELRSERDNLIKDVERLTKALESSQLDTSTCSEPNELSILEKQNEELRVKRRQAEERVLELEASMEHFQAIVVKLTDENDTLQSGQKELNMLKTHLDTAQSDVEEWRTIANKYQSDAEMLKKREKEVKELQGQVKSLTSRLEHHVKTATIDEDNKAGIVQLRSQIGTLTANNVELNVGLESKKRIVEQLELQLIQYKEKVKELEDRKEDLIAERNELENKLLFKESVTPRSLHESMFEAGHLSFDDKTKLPLEIENKRLTERIQELESLEPLKGEIIKMKSQNGVLEEEKLVITKQMEELERQVADLQEKLTKNQQHASGDVVELKVQLEKANVEVERMRETEMRTEAKLAGVEELLRKRNVEKEANETALQKAKAVIDELESRNRPVGEDNKTSVQDFKELKTENELLRQKNEALETALNTTTQSLEQENRLITSAAHQQILDRSSDSMMIMRAQAGSDHPQTLLDTQKMTRALPWRFGISSMLIIFMVWFFINTFCEVNAPPKA.

The span at 1-20 shows a compositional bias: polar residues; it reads MLDLTNQESDSSENGNSKYA. Positions 1–33 are disordered; it reads MLDLTNQESDSSENGNSKYADSTDGRGIGTSRR. An interaction with dli-1 region spans residues 1-236; sequence MLDLTNQESD…ESSVITNGNG (236 aa). The Calponin-homology (CH) domain occupies 43 to 169; sequence RKDLADLVFW…VSLAFIGKTQ (127 aa). Coiled coils occupy residues 244–405 and 436–692; these read LSAN…HVKT and GLES…NRLI. The helical transmembrane segment at 732-752 threads the bilayer; the sequence is ALPWRFGISSMLIIFMVWFFI.

Belongs to the hook family. As to quaternary structure, homodimer. Interacts with the dynein subunit dli-1 via its N-terminus. May interact with microtubules.

It localises to the nucleus membrane. Its subcellular location is the cytoplasm. It is found in the cytoskeleton. The protein localises to the microtubule organizing center. The protein resides in the centrosome. Cytoskeletal linker protein, which is essential for attachment of the centrosome to the nucleus. Required for dynein localization to the nuclear envelope. This is Zygote defective protein 12 (zyg-12) from Caenorhabditis briggsae.